A 137-amino-acid chain; its full sequence is MLDKLDGALRFQQEALNLRAQRQEILSSNIANADTPGFQARDIDFSSQLKKVMEQGRASGTGVSLSLTSARHIPASTVQPPDLDLLFRVPDQPSMDGNTVDMDRERTNFADNSLKYQTDLTVLGGQIKGMMSVLQQG.

The protein belongs to the flagella basal body rod proteins family. As to quaternary structure, the basal body constitutes a major portion of the flagellar organelle and consists of a number of rings mounted on a central rod. In Gram-negative bacteria, at least four rings, L, P, S and M are present, whereas Gram-positive bacteria lack the L and P rings. The rod consists of about 26 subunits of FlgG in the distal portion, and FlgB, FlgC and FlgF build up the proximal portion of the rod with about 6 subunits each. Rod assembly occurs by export via the flagellum-specific pathway of its constituent proteins and by their incorporation into the rod structure in the probable order of FlgB, FlgC, FlgF and FlgG. Another protein, FliE, also assembles onto the stable rod structure.

Its subcellular location is the bacterial flagellum basal body. Functionally, structural component of flagellum, the bacterial motility apparatus. Part of the rod structure of flagellar basal body. This Yersinia enterocolitica protein is Flagellar basal body rod protein FlgB (flgB).